The primary structure comprises 312 residues: Malate dehydrogenase (312 aa).

NAD(+) is bound by residues 7–13 (GAAGGIG) and Asp-34. Residues Arg-81 and Arg-87 each contribute to the substrate site. NAD(+) contacts are provided by residues Asn-94 and 117–119 (ITN). Positions 119 and 153 each coordinate substrate. Catalysis depends on His-177, which acts as the Proton acceptor. Residue Met-227 coordinates NAD(+).

This sequence belongs to the LDH/MDH superfamily. MDH type 1 family. In terms of assembly, homodimer.

The catalysed reaction is (S)-malate + NAD(+) = oxaloacetate + NADH + H(+). Catalyzes the reversible oxidation of malate to oxaloacetate. The sequence is that of Malate dehydrogenase from Klebsiella pneumoniae (strain 342).